A 548-amino-acid chain; its full sequence is Beta-caryophyllene synthase (548 aa).

(2E,6E)-farnesyl diphosphate contacts are provided by arginine 268, aspartate 305, aspartate 309, arginine 446, and aspartate 449. Aspartate 305 and aspartate 309 together coordinate Mg(2+). The DDXXD motif signature appears at 305–309 (DDIYD). Mg(2+) is bound by residues aspartate 449 and glutamate 457.

This sequence belongs to the terpene synthase family. Requires Mg(2+) as cofactor.

The catalysed reaction is (2E,6E)-farnesyl diphosphate = (-)-(E)-beta-caryophyllene + diphosphate. Its pathway is secondary metabolite biosynthesis; terpenoid biosynthesis. Functionally, sesquiterpene synthase that catalyzes the formation of sesquiterpenes and sesquiterpenoid alcohols. Converts farnesyl diphosphate (FPP) to beta-caryophyllene. Can use geranyl diphosphate (GPP) to produce myrcene, limonene and camphene. This chain is Beta-caryophyllene synthase, found in Lavandula angustifolia (Lavender).